The primary structure comprises 232 residues: Large ribosomal subunit protein uL1 (232 aa).

It belongs to the universal ribosomal protein uL1 family. Part of the 50S ribosomal subunit.

Functionally, binds directly to 23S rRNA. The L1 stalk is quite mobile in the ribosome, and is involved in E site tRNA release. Its function is as follows. Protein L1 is also a translational repressor protein, it controls the translation of the L11 operon by binding to its mRNA. This chain is Large ribosomal subunit protein uL1, found in Xylella fastidiosa (strain M23).